Here is a 338-residue protein sequence, read N- to C-terminus: Glycerol-3-phosphate dehydrogenase [NAD(P)+] (338 aa).

NADPH-binding residues include tryptophan 20 and lysine 110. 3 residues coordinate sn-glycerol 3-phosphate: lysine 110, glycine 141, and serine 143. Residue alanine 145 coordinates NADPH. Sn-glycerol 3-phosphate-binding residues include lysine 197, aspartate 250, serine 260, arginine 261, and asparagine 262. Lysine 197 (proton acceptor) is an active-site residue. Residue arginine 261 coordinates NADPH. Position 287 (glutamate 287) interacts with NADPH.

Belongs to the NAD-dependent glycerol-3-phosphate dehydrogenase family.

It is found in the cytoplasm. It catalyses the reaction sn-glycerol 3-phosphate + NAD(+) = dihydroxyacetone phosphate + NADH + H(+). It carries out the reaction sn-glycerol 3-phosphate + NADP(+) = dihydroxyacetone phosphate + NADPH + H(+). The protein operates within membrane lipid metabolism; glycerophospholipid metabolism. Functionally, catalyzes the reduction of the glycolytic intermediate dihydroxyacetone phosphate (DHAP) to sn-glycerol 3-phosphate (G3P), the key precursor for phospholipid synthesis. In Aster yellows witches'-broom phytoplasma (strain AYWB), this protein is Glycerol-3-phosphate dehydrogenase [NAD(P)+].